The following is a 612-amino-acid chain: Protein cereblon (612 aa).

Over residues 1–11 (MDDEETAEIED) the composition is skewed to acidic residues. 3 disordered regions span residues 1–30 (MDDEETAEIEDVNVLVPATGGEGPVDGASA), 58–133 (MELI…NPHP), and 181–211 (QERRRSRTSEEGEASSEPPHTPPPPRSPYDV). Over residues 69-81 (AADAPDAAASTGS) the composition is skewed to low complexity. The segment covering 181 to 190 (QERRRSRTSE) has biased composition (basic and acidic residues). The Lon N-terminal domain maps to 250-478 (HMLIFLHQHI…IIGSTLKDES (229 aa)). Positions 477 to 586 (ESVFYCRYCN…LAGSSVRIGK (110 aa)) constitute a CULT domain. Residues Cys-482, Cys-485, Cys-551, and Cys-554 each coordinate Zn(2+).

The protein belongs to the CRBN family. In terms of assembly, likely a component of a DCX (DDB1-CUL4-X-box) protein ligase complex. May interact with pic/DDB1. Post-translationally, ubiquitinated.

Its subcellular location is the nucleus. It functions in the pathway protein modification; protein ubiquitination. Substrate recognition component of a DCX (DDB1-CUL4-X-box) E3 protein ligase complex that mediates the ubiquitination and subsequent proteasomal degradation of target proteins. Has an essential role in mediating growth by negatively regulating insulin signaling. It also has a role in maintaining presynaptic function in the neuromuscular junction synapses of third-instar larvae. This chain is Protein cereblon, found in Drosophila willistoni (Fruit fly).